The following is a 496-amino-acid chain: Maturase K (496 aa).

It belongs to the intron maturase 2 family. MatK subfamily.

It is found in the plastid. The protein localises to the chloroplast. Its function is as follows. Usually encoded in the trnK tRNA gene intron. Probably assists in splicing its own and other chloroplast group II introns. The sequence is that of Maturase K from Paeonia suffruticosa (Tree peony).